The chain runs to 174 residues: Shikimate kinase 2 (174 aa).

12–17 serves as a coordination point for ATP; it reads GAGKTT. The Mg(2+) site is built by Thr-16 and Asp-32. Asp-34, Arg-58, and Gly-79 together coordinate substrate. The segment at 112-126 is LID domain; the sequence is AEDPEEAQRPSLTGK. Residue Arg-120 participates in ATP binding. Arg-139 contributes to the substrate binding site. Gln-155 contacts ATP.

It belongs to the shikimate kinase family. AroL subfamily. Monomer. Mg(2+) serves as cofactor.

It localises to the cytoplasm. The enzyme catalyses shikimate + ATP = 3-phosphoshikimate + ADP + H(+). It functions in the pathway metabolic intermediate biosynthesis; chorismate biosynthesis; chorismate from D-erythrose 4-phosphate and phosphoenolpyruvate: step 5/7. Its function is as follows. Catalyzes the specific phosphorylation of the 3-hydroxyl group of shikimic acid using ATP as a cosubstrate. In Yersinia pestis bv. Antiqua (strain Antiqua), this protein is Shikimate kinase 2.